Consider the following 495-residue polypeptide: Two-component response regulator-like APRR3 (495 aa).

A Response regulatory domain is found at 65–183 (KVLLVENDDS…ELKNLWQHVW (119 aa)). Disordered regions lie at residues 188-441 (SSSG…RWAQ) and 465-495 (HSRK…SEDN). A compositionally biased stretch (polar residues) spans 206–217 (PESTQGSENDAS). A compositionally biased stretch (low complexity) spans 231–248 (GLSNQDGGSDNGSGTQSS). Polar residues predominate over residues 256 to 265 (TKSTSPSNQF). A compositionally biased stretch (basic and acidic residues) spans 284–293 (RLKEAEDQKE). A compositionally biased stretch (polar residues) spans 294 to 304 (QIGTGSQTGMS). Over residues 307–319 (KKAEEPGDLEKNA) the composition is skewed to basic and acidic residues. Polar residues predominate over residues 335 to 350 (NRSSGNSQVESKAPSS). A coiled-coil region spans residues 349-372 (SSNREDLQSLEQTLKKTREDRDYK). A compositionally biased stretch (basic and acidic residues) spans 351-378 (NREDLQSLEQTLKKTREDRDYKVGDRSV). Composition is skewed to polar residues over residues 380 to 395 (RHSN…NGAT) and 420 to 436 (GSSS…SSGS). The CCT domain occupies 442–484 (REAALMKFRLKRKERCFEKKVRYHSRKKLAEQRPHVKGQFIRK). Over residues 483–495 (RKRDDHKSGSEDN) the composition is skewed to basic and acidic residues.

It belongs to the ARR-like family. In terms of assembly, interacts with APRR1/TOC1 (via N-terminus). In terms of processing, phosphorylated by WNK1; during the night. Phosphorylation is required for optimal interaction with APRR1/TOC1.

It localises to the nucleus. In terms of biological role, controls photoperiodic flowering response. Component of the circadian clock. Controls the degradation of APRR1/TOC1 by the SCF(ZTL) complex. Expression of several members of the ARR-like family is controlled by circadian rhythm. The particular coordinated sequential expression of APRR9, APRR7, APRR5, APRR3 and APPR1 result to circadian waves that may be at the basis of the endogenous circadian clock. The chain is Two-component response regulator-like APRR3 (APRR3) from Arabidopsis thaliana (Mouse-ear cress).